The primary structure comprises 273 residues: Shikimate dehydrogenase (NADP(+)) (273 aa).

Residues 19–21 (SQS) and Thr66 contribute to the shikimate site. The active-site Proton acceptor is the Lys70. Residue Glu82 coordinates NADP(+). Shikimate contacts are provided by Asn91 and Asp107. Residues 131 to 135 (GAGGA) and Met217 contribute to the NADP(+) site. Tyr219 contributes to the shikimate binding site. Gly241 contributes to the NADP(+) binding site.

Belongs to the shikimate dehydrogenase family. In terms of assembly, homodimer.

It carries out the reaction shikimate + NADP(+) = 3-dehydroshikimate + NADPH + H(+). It participates in metabolic intermediate biosynthesis; chorismate biosynthesis; chorismate from D-erythrose 4-phosphate and phosphoenolpyruvate: step 4/7. Its function is as follows. Involved in the biosynthesis of the chorismate, which leads to the biosynthesis of aromatic amino acids. Catalyzes the reversible NADPH linked reduction of 3-dehydroshikimate (DHSA) to yield shikimate (SA). The sequence is that of Shikimate dehydrogenase (NADP(+)) from Buchnera aphidicola subsp. Schizaphis graminum (strain Sg).